The chain runs to 132 residues: SH2 domain-containing protein 1B (132 aa).

In terms of domain architecture, SH2 spans 5–101 (YYHGRLTKQD…GMVVHLLKPI (97 aa)). At Y127 the chain carries Phosphotyrosine.

In terms of assembly, binds to the phosphorylated receptors CD84, SLAMF1, LY9 and CD244. Does not bind to non-phosphorylated SLAMF1. Interacts with SLAMF7 (via ITSM phosphorylated on 'Tyr-304'). Interacts with Src kinases HCK, LYN, FYN, FGR and LCK (via kinase domains). Interacts (phosphorylated at Tyr-127) with PLCG1.

Its function is as follows. Cytoplasmic adapter regulating receptors of the signaling lymphocytic activation molecule (SLAM) family such as CD84, SLAMF1, LY9 and CD244. In SLAM signaling seems to cooperate with SH2D1A/SAP. Plays a role in regulation of effector functions of natural killer (NK) cells by controlling signal transduction through CD244/2B4 without effecting its tyrosine phosphorylation; downstream signaling involves PLCG1 and ERK activation. Activation of SLAMF7-mediated NK cell function does not effect receptor tyrosine phosphorylation but distal signaling. In the context of NK cell-mediated cytotoxicity does not enhance conjugate formation with target cells but stimulates polarization of the microtubule-organizing center and cytotoxic granules toward the NK cell synapse. Negatively regulates CD40-induced cytokine production in dendritic cells downstream of SLAM family receptors probably by inducing activation of the PI3K pathway to inhibit p38 MAPK and JNK activation. This chain is SH2 domain-containing protein 1B (SH2D1B), found in Homo sapiens (Human).